Consider the following 205-residue polypeptide: Cyanate hydratase (205 aa).

Residues Arg-133, Glu-136, and Ser-159 contribute to the active site.

This sequence belongs to the cyanase family.

The enzyme catalyses cyanate + hydrogencarbonate + 3 H(+) = NH4(+) + 2 CO2. Functionally, catalyzes the reaction of cyanate with bicarbonate to produce ammonia and carbon dioxide. The chain is Cyanate hydratase from Thalassiosira pseudonana (Marine diatom).